The primary structure comprises 552 residues: Serine palmitoyltransferase 3 (552 aa).

The segment at 1–29 is disordered; it reads MANPGGGAVCNGKLHNHKKQSNGSQSRNC. The chain crosses the membrane as a helical span at residues 59 to 79; sequence PLHVMVFTYMGYGIGTLFGYL. N6-(pyridoxal phosphate)lysine is present on lysine 371.

Belongs to the class-II pyridoxal-phosphate-dependent aminotransferase family. In terms of assembly, component of the serine palmitoyltransferase (SPT) complex, which is composed of SPTLC1, SPTLC2 or SPTLC3 and SPTSSA or SPTSSB. The heterodimer consisting of SPTLC1 and SPTLC2/SPTLC3 forms the catalytic core of the enzyme, while SPTSSA or SPTSSB subunits determine substrate specificity. SPT also interacts with ORMDL proteins, especially ORMDL3, which negatively regulate SPT activity in the presence of ceramides. Pyridoxal 5'-phosphate serves as cofactor. In terms of tissue distribution, expressed in most tissues, except peripheral blood cells and bone marrow, with highest levels in heart, kidney, liver, uterus and skin.

It is found in the endoplasmic reticulum membrane. It catalyses the reaction L-serine + hexadecanoyl-CoA + H(+) = 3-oxosphinganine + CO2 + CoA. The enzyme catalyses dodecanoyl-CoA + L-serine + H(+) = 3-oxotetradecasphinganine + CO2 + CoA. It carries out the reaction tetradecanoyl-CoA + L-serine + H(+) = 3-oxohexadecasphinganine + CO2 + CoA. The catalysed reaction is octadecanoyl-CoA + L-serine + H(+) = 3-oxoeicosasphinganine + CO2 + CoA. It functions in the pathway lipid metabolism; sphingolipid metabolism. With respect to regulation, SPT complex catalytic activity is negatively regulated by ORMDL proteins, including ORMDL3, in the presence of ceramides. This mechanism allows to maintain ceramide levels at sufficient concentrations for the production of complex sphingolipids, but which prevents the accumulation of ceramides to levels that trigger apoptosis. Functionally, component of the serine palmitoyltransferase multisubunit enzyme (SPT) that catalyzes the initial and rate-limiting step in sphingolipid biosynthesis by condensing L-serine and activated acyl-CoA (most commonly palmitoyl-CoA) to form long-chain bases. The SPT complex is composed of SPTLC1, SPTLC2 or SPTLC3 and SPTSSA or SPTSSB. Within this complex, the heterodimer consisting of SPTLC1 and SPTLC2/SPTLC3 forms the catalytic core. The composition of the serine palmitoyltransferase (SPT) complex determines the substrate preference. The SPTLC1-SPTLC2-SPTSSA complex shows a strong preference for C16-CoA substrate, while the SPTLC1-SPTLC3-SPTSSA isozyme uses both C14-CoA and C16-CoA as substrates, with a slight preference for C14-CoA. The SPTLC1-SPTLC2-SPTSSB complex shows a strong preference for C18-CoA substrate, while the SPTLC1-SPTLC3-SPTSSB isozyme displays an ability to use a broader range of acyl-CoAs, without apparent preference. The chain is Serine palmitoyltransferase 3 from Homo sapiens (Human).